The chain runs to 282 residues: MEFSCTLTLKELLESGAHFGHQTSRWNPRMKPFIFEEKNGLYIIDLAKTLAQLKKAVACIQTTIGQEKSILFVGTKKQAKQIIREAAIECGEFFASERWLGGMLTNMATIRNSVKTLNRIELDLEASNSGLTKKELALLAKRHRKLLNNLEGVRHMNSLPGLLIVIDPGYERIAVAEAGKLGIPVMALVDTNCDPTPINHVIPCNDDSMKSIRLIVNVLKDAVIDAKKRLGVEILSPVRPAERPAEEAVEELPLPTGEAQDEASSKEGVLLWADIDNCEALK.

Residues 245-266 (AEEAVEELPLPTGEAQDEASSK) form a disordered region.

Belongs to the universal ribosomal protein uS2 family.

The protein is Small ribosomal subunit protein uS2 (rpsB) of Chlamydia trachomatis serovar D (strain ATCC VR-885 / DSM 19411 / UW-3/Cx).